The chain runs to 375 residues: Alcohol dehydrogenase 1C (375 aa).

Serine 2 bears the N-acetylserine mark. Serine 23 carries the phosphoserine modification. Positions 47, 68, 98, 101, 104, 112, and 175 each coordinate Zn(2+). NAD(+) contacts are provided by residues 200-205 (GLGGVG), aspartate 224, lysine 229, isoleucine 270, 293-295 (VGV), 318-320 (AIF), and arginine 370.

This sequence belongs to the zinc-containing alcohol dehydrogenase family. Dimer of identical or non-identical chains of class I alcohol dehydrogenase: ADH1A, ADH1B, and ADH1C. The cofactor is Zn(2+). In terms of tissue distribution, expressed in kidney.

The protein localises to the cytoplasm. It catalyses the reaction a primary alcohol + NAD(+) = an aldehyde + NADH + H(+). It carries out the reaction ethanol + NAD(+) = acetaldehyde + NADH + H(+). In terms of biological role, alcohol dehydrogenase. Exhibits high activity for ethanol oxidation and plays a major role in ethanol catabolism. This is Alcohol dehydrogenase 1C (ADH1C) from Papio hamadryas (Hamadryas baboon).